The sequence spans 564 residues: Beta-catenin-like protein 1 homolog (564 aa).

The interval 1–56 (MDVDSIFKNTEETNKKRNPEEADSLEPASSRRRLAEENSDEENEEFDEEGGRFFGS) is disordered. Basic and acidic residues predominate over residues 9–20 (NTEETNKKRNPE). The span at 37–48 (ENSDEENEEFDE) shows a compositional bias: acidic residues. A Phosphoserine modification is found at Ser-39. HEAT repeat units follow at residues 83–133 (PTEL…VLSE) and 138–177 (IPIF…DEDV). ARM repeat units follow at residues 179–229 (PDAL…LLSV), 230–276 (DNSI…LANS), 277–326 (KEAK…LVQE), 328–366 (KGKS…LLFG), and 367–411 (PLST…LFRS). Residues 465–528 (EKSTKWFLQQ…DALKNYHENL (64 aa)) are a coiled coil.

Its subcellular location is the nucleus. Probable spliceosomal component involved in the activation of pre-mRNA splicing. The sequence is that of Beta-catenin-like protein 1 homolog (ctnnbl1) from Schizosaccharomyces pombe (strain 972 / ATCC 24843) (Fission yeast).